Consider the following 431-residue polypeptide: Glucose-1-phosphate adenylyltransferase (431 aa).

K39 is a binding site for beta-D-fructose 1,6-bisphosphate. Residues R40, H46, and R52 each contribute to the AMP site. An alpha-D-glucose 1-phosphate-binding site is contributed by Y114. R130 is a binding site for AMP. Residues G179, E194–K195, and S212 contribute to the alpha-D-glucose 1-phosphate site. Residues E370 and R386 each coordinate AMP. Beta-D-fructose 1,6-bisphosphate-binding positions include R419–R423 and Q429–R431.

This sequence belongs to the bacterial/plant glucose-1-phosphate adenylyltransferase family. As to quaternary structure, homotetramer.

The enzyme catalyses alpha-D-glucose 1-phosphate + ATP + H(+) = ADP-alpha-D-glucose + diphosphate. It participates in glycan biosynthesis; glycogen biosynthesis. Allosterically activated by fructose-1,6-bisphosphate (F16BP) and inhibited by AMP. Functionally, involved in the biosynthesis of ADP-glucose, a building block required for the elongation reactions to produce glycogen. Catalyzes the reaction between ATP and alpha-D-glucose 1-phosphate (G1P) to produce pyrophosphate and ADP-Glc. This is Glucose-1-phosphate adenylyltransferase from Escherichia fergusonii (strain ATCC 35469 / DSM 13698 / CCUG 18766 / IAM 14443 / JCM 21226 / LMG 7866 / NBRC 102419 / NCTC 12128 / CDC 0568-73).